The following is a 314-amino-acid chain: Olfactory receptor 5P66 (314 aa).

Residues 1–28 (MAFLENGNHTAVSEFILLGLTDDPVLRI) lie on the Extracellular side of the membrane. Asn8 is a glycosylation site (N-linked (GlcNAc...) asparagine). The helical transmembrane segment at 29 to 49 (VLFTIILCIYLVTVSGNLSTI) threads the bilayer. Topologically, residues 50–57 (LLIRVSSQ) are cytoplasmic. The helical transmembrane segment at 58–78 (LHHPMYFFLSHLASADIGLSS) threads the bilayer. Residues 79–102 (SVTPNMLVNFLVERSTISYLGCGI) lie on the Extracellular side of the membrane. An intrachain disulfide couples Cys100 to Cys192. Residues 103–123 (QLSSAALFGATECFLLAAMAY) traverse the membrane as a helical segment. The Cytoplasmic portion of the chain corresponds to 124 to 136 (DRFMAICNPLLYS). A helical membrane pass occupies residues 137-157 (TKMSTKVCVQLIVGSYIAGFL). The Extracellular portion of the chain corresponds to 158–199 (NASSFLLSFFSLLFCGQNIINDFFCDFAPLAELSCSDVSVFV). A helical transmembrane segment spans residues 200-220 (VVISFSAGTVTMLTVFVIAIS). Residues 221–240 (YSYILITILKMRSTEGRQKA) lie on the Cytoplasmic side of the membrane. The chain crosses the membrane as a helical span at residues 241–261 (FSTCTSHLTAVTLFYGTVTFI). At 262–274 (YVMPKSSYSMDQN) the chain is on the extracellular side. A helical transmembrane segment spans residues 275–295 (KIISVFYMVVVPMLNPLIYSL). Residues 296-314 (RNNEIKGALKRHFDRKTFS) lie on the Cytoplasmic side of the membrane.

This sequence belongs to the G-protein coupled receptor 1 family.

The protein resides in the cell membrane. Potential odorant receptor. This chain is Olfactory receptor 5P66, found in Mus musculus (Mouse).